The sequence spans 439 residues: tRNA-2-methylthio-N(6)-dimethylallyladenosine synthase (439 aa).

Positions L2–A116 constitute an MTTase N-terminal domain. [4Fe-4S] cluster is bound by residues C11, C47, C79, C149, C153, and C156. The Radical SAM core domain maps to K135–E368. The TRAM domain maps to R371 to N437.

Belongs to the methylthiotransferase family. MiaB subfamily. Monomer. It depends on [4Fe-4S] cluster as a cofactor.

It is found in the cytoplasm. It catalyses the reaction N(6)-dimethylallyladenosine(37) in tRNA + (sulfur carrier)-SH + AH2 + 2 S-adenosyl-L-methionine = 2-methylsulfanyl-N(6)-dimethylallyladenosine(37) in tRNA + (sulfur carrier)-H + 5'-deoxyadenosine + L-methionine + A + S-adenosyl-L-homocysteine + 2 H(+). Catalyzes the methylthiolation of N6-(dimethylallyl)adenosine (i(6)A), leading to the formation of 2-methylthio-N6-(dimethylallyl)adenosine (ms(2)i(6)A) at position 37 in tRNAs that read codons beginning with uridine. The protein is tRNA-2-methylthio-N(6)-dimethylallyladenosine synthase of Helicobacter acinonychis (strain Sheeba).